The primary structure comprises 101 residues: Urease subunit beta (101 aa).

Belongs to the urease beta subunit family. Heterotrimer of UreA (gamma), UreB (beta) and UreC (alpha) subunits. Three heterotrimers associate to form the active enzyme.

It is found in the cytoplasm. It catalyses the reaction urea + 2 H2O + H(+) = hydrogencarbonate + 2 NH4(+). It functions in the pathway nitrogen metabolism; urea degradation; CO(2) and NH(3) from urea (urease route): step 1/1. This chain is Urease subunit beta, found in Granulibacter bethesdensis (strain ATCC BAA-1260 / CGDNIH1).